The following is a 426-amino-acid chain: D-tagatose-1,6-bisphosphate aldolase subunit KbaZ (426 aa).

This sequence belongs to the GatZ/KbaZ family. KbaZ subfamily. Forms a complex with KbaY.

It participates in carbohydrate metabolism; D-tagatose 6-phosphate degradation; D-glyceraldehyde 3-phosphate and glycerone phosphate from D-tagatose 6-phosphate: step 2/2. In terms of biological role, component of the tagatose-1,6-bisphosphate aldolase KbaYZ that is required for full activity and stability of the Y subunit. Could have a chaperone-like function for the proper and stable folding of KbaY. When expressed alone, KbaZ does not show any aldolase activity. The polypeptide is D-tagatose-1,6-bisphosphate aldolase subunit KbaZ (Escherichia coli (strain SMS-3-5 / SECEC)).